Reading from the N-terminus, the 228-residue chain is Cytochrome c oxidase subunit 2 (228 aa).

The Mitochondrial intermembrane segment spans residues 1–26 (MSTWANLGLQDSASPLMEQLIFFHDH). A helical membrane pass occupies residues 27 to 48 (ALLILVMITVLVGYLMFMLFFN). The Mitochondrial matrix portion of the chain corresponds to 49–62 (NYVNRFLLHGQLIE). Residues 63-82 (MIWTILPAIILLFIALPSLR) traverse the membrane as a helical segment. The Mitochondrial intermembrane segment spans residues 83-228 (LLYLLDEINE…FIKWISSNNS (146 aa)). Cu cation contacts are provided by His-161, Cys-196, Glu-198, Cys-200, His-204, and Met-207. Glu-198 contacts Mg(2+).

Belongs to the cytochrome c oxidase subunit 2 family. Component of the cytochrome c oxidase (complex IV, CIV), a multisubunit enzyme composed of a catalytic core of 3 subunits and several supernumerary subunits. The complex exists as a monomer or a dimer and forms supercomplexes (SCs) in the inner mitochondrial membrane with ubiquinol-cytochrome c oxidoreductase (cytochrome b-c1 complex, complex III, CIII). Requires Cu cation as cofactor.

Its subcellular location is the mitochondrion inner membrane. It catalyses the reaction 4 Fe(II)-[cytochrome c] + O2 + 8 H(+)(in) = 4 Fe(III)-[cytochrome c] + 2 H2O + 4 H(+)(out). Functionally, component of the cytochrome c oxidase, the last enzyme in the mitochondrial electron transport chain which drives oxidative phosphorylation. The respiratory chain contains 3 multisubunit complexes succinate dehydrogenase (complex II, CII), ubiquinol-cytochrome c oxidoreductase (cytochrome b-c1 complex, complex III, CIII) and cytochrome c oxidase (complex IV, CIV), that cooperate to transfer electrons derived from NADH and succinate to molecular oxygen, creating an electrochemical gradient over the inner membrane that drives transmembrane transport and the ATP synthase. Cytochrome c oxidase is the component of the respiratory chain that catalyzes the reduction of oxygen to water. Electrons originating from reduced cytochrome c in the intermembrane space (IMS) are transferred via the dinuclear copper A center (CU(A)) of subunit 2 and heme A of subunit 1 to the active site in subunit 1, a binuclear center (BNC) formed by heme A3 and copper B (CU(B)). The BNC reduces molecular oxygen to 2 water molecules using 4 electrons from cytochrome c in the IMS and 4 protons from the mitochondrial matrix. The sequence is that of Cytochrome c oxidase subunit 2 (mt:CoII) from Drosophila yakuba (Fruit fly).